We begin with the raw amino-acid sequence, 207 residues long: Protein N-terminal glutamine amidohydrolase (207 aa).

Residues Cys30, His83, and Asp99 contribute to the active site.

It belongs to the NTAQ1 family. As to quaternary structure, monomer.

It localises to the cytoplasm. The protein localises to the cytosol. Its subcellular location is the nucleus. The enzyme catalyses N-terminal L-glutaminyl-[protein] + H2O = N-terminal L-glutamyl-[protein] + NH4(+). Functionally, mediates the side-chain deamidation of N-terminal glutamine residues to glutamate, an important step in N-end rule pathway of protein degradation. Conversion of the resulting N-terminal glutamine to glutamate renders the protein susceptible to arginylation, polyubiquitination and degradation as specified by the N-end rule. Does not act on substrates with internal or C-terminal glutamine and does not act on non-glutamine residues in any position. Does not deaminate acetylated N-terminal glutamine. With the exception of proline, all tested second-position residues on substrate peptides do not greatly influence the activity. In contrast, a proline at position 2, virtually abolishes deamidation of N-terminal glutamine. This chain is Protein N-terminal glutamine amidohydrolase (Ntaq1), found in Rattus norvegicus (Rat).